We begin with the raw amino-acid sequence, 298 residues long: Proton-activated chloride channel (298 aa).

Topologically, residues 1–12 (MPIGFNKACLKN) are cytoplasmic. Residues 13 to 33 (VFTVILVLIYLALTAVAVFLA) form a helical membrane-spanning segment. Topologically, residues 34–245 (YQTISDFMDK…RDPFIQQVKD (212 aa)) are extracellular. Residues 246 to 266 (IVTANPWNTIAILCGVFMALF) traverse the membrane as a helical segment. At 267–298 (KAADFAKLSIKWMIRIRKRHIRAKMREMNQIS) the chain is on the cytoplasmic side.

The protein belongs to the proton-activated chloride channel family.

The protein localises to the cell membrane. It catalyses the reaction chloride(in) = chloride(out). Chloride channel gated by pH that facilitates the entry of chloride ions into cells upon exposure to extracellular acidic pH. Displays channel activity with distinct kinetic properties compared to the human ortholog channel. This is Proton-activated chloride channel from Danio rerio (Zebrafish).